The sequence spans 345 residues: Small ribosomal subunit protein mS45 (345 aa).

Residues 1–27 (MSYGLTGTSSKLRGTSSIFSWTQVRHF) constitute a mitochondrion transit peptide.

Belongs to the mitochondrion-specific ribosomal protein mS45 family. Component of the mitochondrial small ribosomal subunit (mt-SSU). Mature yeast 74S mitochondrial ribosomes consist of a small (37S) and a large (54S) subunit. The 37S small subunit contains a 15S ribosomal RNA (15S mt-rRNA) and 34 different proteins. The 54S large subunit contains a 21S rRNA (21S mt-rRNA) and 46 different proteins.

It localises to the mitochondrion. Its function is as follows. Component of the mitochondrial ribosome (mitoribosome), a dedicated translation machinery responsible for the synthesis of mitochondrial genome-encoded proteins, including at least some of the essential transmembrane subunits of the mitochondrial respiratory chain. The mitoribosomes are attached to the mitochondrial inner membrane and translation products are cotranslationally integrated into the membrane. The chain is Small ribosomal subunit protein mS45 (MRPS35) from Saccharomyces cerevisiae (strain ATCC 204508 / S288c) (Baker's yeast).